The following is an 875-amino-acid chain: Protein translocase subunit SecA (875 aa).

ATP-binding positions include Q87, 105–109 (GEGKT), and D512. Zn(2+) contacts are provided by C860, C862, C871, and H872.

It belongs to the SecA family. Monomer and homodimer. Part of the essential Sec protein translocation apparatus which comprises SecA, SecYEG and auxiliary proteins SecDF-YajC and YidC. Zn(2+) is required as a cofactor.

The protein resides in the cell inner membrane. The protein localises to the cytoplasm. It catalyses the reaction ATP + H2O + cellular proteinSide 1 = ADP + phosphate + cellular proteinSide 2.. Functionally, part of the Sec protein translocase complex. Interacts with the SecYEG preprotein conducting channel. Has a central role in coupling the hydrolysis of ATP to the transfer of proteins into and across the cell membrane, serving both as a receptor for the preprotein-SecB complex and as an ATP-driven molecular motor driving the stepwise translocation of polypeptide chains across the membrane. The chain is Protein translocase subunit SecA from Buchnera aphidicola subsp. Acyrthosiphon pisum (strain 5A).